We begin with the raw amino-acid sequence, 337 residues long: Endochitinase 37 (337 aa).

The N-terminal stretch at 1 to 25 (MTRLLDASFLLLPVIASTLFGTASA) is a signal peptide. The GH18 domain maps to 38-337 (KVLQGYWENW…GSKNWTFGDN (300 aa)). Residue Glu-160 is the Proton donor of the active site. Residue Asn-331 is glycosylated (N-linked (GlcNAc...) asparagine).

This sequence belongs to the glycosyl hydrolase 18 family. Chitinase class V subfamily. In terms of assembly, monomer.

The protein localises to the secreted. The enzyme catalyses Random endo-hydrolysis of N-acetyl-beta-D-glucosaminide (1-&gt;4)-beta-linkages in chitin and chitodextrins.. In terms of biological role, secreted chitinase involved in the degradation of chitin, a component of the cell walls of fungi and exoskeletal elements of some animals (including worms and arthropods). Plays a morphogenetic role during apical growth, cell division and differentiation (cell wall morphogenesis). May be involved in the degradation and further assimilation of phytopathogenic fungi, namely mycoparasitism, the major mechanism accounting for the antagonistic activity against phytopathogenic fungi displayed by Trichoderma. The sequence is that of Endochitinase 37 (chit37) from Trichoderma harzianum (Hypocrea lixii).